We begin with the raw amino-acid sequence, 313 residues long: PDCD10 and GCKIII kinases-associated protein 1 (313 aa).

Residues 40-89 are disordered; it reads RLKGTQNSEVEVPRNALHDGSLSNSESRGSTTGLPHQGPLPQEDSEERPC. Phosphoserine occurs at positions 60 and 64. Residues 60–73 are compositionally biased toward polar residues; that stretch reads SLSNSESRGSTTGL. Phosphothreonine is present on T104. A phosphoserine mark is found at S107, S237, and S240. Positions 253-286 are disordered; it reads YFKEEGPTHPTPAADSGSEREDPHTYNGDREGVV. Residues 269-285 are compositionally biased toward basic and acidic residues; that stretch reads GSEREDPHTYNGDREGV.

As to quaternary structure, interacts with KEAP1; this interaction prevents the ubiquitination of KEAP1 by TRIM25, thus protecting KEAP1 from degradation. Found in association with PDCD10 and members of the STE20 kinases, such as STK24, STK25 and STK26.

The protein localises to the cell membrane. Functionally, acts as a tumor suppressor. Acts as a tumor suppressor for colorectal cancer cell proliferation by targeting KEAP1/USP17/ELK1/CDK6 axis. The protein is PDCD10 and GCKIII kinases-associated protein 1 of Mus musculus (Mouse).